Consider the following 314-residue polypeptide: Protein YdgH (314 aa).

An N-terminal signal peptide occupies residues 1–19; it reads MKLKNTLLASALLSAMAFS.

It to E.coli YjfY.

This Escherichia coli (strain K12) protein is Protein YdgH (ydgH).